The chain runs to 440 residues: 3-phosphoshikimate 1-carboxyvinyltransferase (440 aa).

Lys29 and Arg34 together coordinate 3-phosphoshikimate. A phosphoenolpyruvate-binding site is contributed by Lys29. The phosphoenolpyruvate site is built by Gly99 and Arg128. Positions 171, 172, 173, 199, 316, and 343 each coordinate 3-phosphoshikimate. Residue Gln173 participates in phosphoenolpyruvate binding. The active-site Proton acceptor is the Asp316. Arg347, Arg390, and Lys416 together coordinate phosphoenolpyruvate.

The protein belongs to the EPSP synthase family. Monomer.

It localises to the cytoplasm. It catalyses the reaction 3-phosphoshikimate + phosphoenolpyruvate = 5-O-(1-carboxyvinyl)-3-phosphoshikimate + phosphate. It participates in metabolic intermediate biosynthesis; chorismate biosynthesis; chorismate from D-erythrose 4-phosphate and phosphoenolpyruvate: step 6/7. Its function is as follows. Catalyzes the transfer of the enolpyruvyl moiety of phosphoenolpyruvate (PEP) to the 5-hydroxyl of shikimate-3-phosphate (S3P) to produce enolpyruvyl shikimate-3-phosphate and inorganic phosphate. The protein is 3-phosphoshikimate 1-carboxyvinyltransferase of Deinococcus geothermalis (strain DSM 11300 / CIP 105573 / AG-3a).